A 485-amino-acid chain; its full sequence is GlcNAc-binding protein A (485 aa).

The signal sequence occupies residues 1–29 (MKKQPQKTLLAIALSVVSGTAMSHGYVSA). The Chitin-binding type-4 domain maps to 30 to 200 (VENGVAEARV…SFYNVIDVKF (171 aa)). The 42-residue stretch at 437–478 (ADTKVLASDGAIYQCKPFPYSGYCVQWTPTATQYQPGTGSHW) folds into the Chitin-binding type-3 domain.

It belongs to the GbpA family.

The protein resides in the secreted. Its function is as follows. Probably interacts with GlcNAc residues. May promote attachment to both epithelial cell surfaces and chitin. This is GlcNAc-binding protein A from Vibrio vulnificus (strain CMCP6).